The chain runs to 453 residues: Glucose N-acetyltransferase 1-B (453 aa).

At 1–8 the chain is on the cytoplasmic side; the sequence is MLKRKVRY. A helical; Signal-anchor for type II membrane protein transmembrane segment spans residues 9–29; the sequence is LLLIVVVFTGIILSVEAIMRF. At 30–453 the chain is on the lumenal side; it reads QLNKNVDYYL…LESRAICQVN (424 aa). 3 N-linked (GlcNAc...) asparagine glycosylation sites follow: asparagine 108, asparagine 126, and asparagine 176. The DXD signature appears at 187–189; it reads DND.

This sequence belongs to the GNT1 family.

The protein resides in the golgi apparatus membrane. It is found in the vacuole membrane. Its function is as follows. N-acetylglucosaminyltransferase involved in the Golgi-specific modification of N-linked glycans. The protein is Glucose N-acetyltransferase 1-B (GNT1-B) of Kluyveromyces lactis (strain ATCC 8585 / CBS 2359 / DSM 70799 / NBRC 1267 / NRRL Y-1140 / WM37) (Yeast).